Consider the following 1313-residue polypeptide: MGAASGQRGRWPLSPPLLMLSLLLLLLLPPSPAPALDPGLQPGNFSADEAGAQLFADSYNSSAEVVMFQSTAASWAHDTNITEENARLQEEAALINQEFAEVWGKKAKELYESIWQNFTDQKLRRIIGSVQTLGPANLPLTQRLQYNSLLSNMSRIYSTGKVCFPNKTATCWSLDPELTNILASSRNYAKVLFAWEGWHDAVGIPLRPLYQDFTALSNEAYRQDGFSDTGAYWRSWYESPSFEESLEHLYHQVEPLYLNLHAFVRRALHRRYGDKYINLRGPIPAHLLGDMWAQSWENIYDMVVPFPDKPNLDVTSTMVQKGWNATHMFRVAEEFFTSLGLSPMPPEFWAESMLEKPADGREVVCHASAWDFYNRKDFRIKQCTRVTMDQLSTVHHEMGHVQYYLQYKDLHVSLRRGANPGFHEAIGDVLALSVSTPAHLHKIGLLDRVANDIESDINYLLKMALEKIAFLPFGYLVDQWRWGVFSGRTPPSRYNYDWWYLRTKYQGICPPVARNETHFDAGAKFHIPSVTPYIRYFVSFVLQFQFHQALCKEAGHQGPLHQCDIYQSTKAGAKLQQVLQAGCSRPWQEVLKDLVGSDALDASALMEYFQPVSQWLQEQNQRNGEVLGWPEYQWRPPLPDNYPEGIDLETDEAKANRFVEEYDRTAKVLWNEYAEANWHYNTNITIEGSKILLQKNKEVSNHTLKYGTWAKTFDVSNFQNSTIKRIIKKVQNVDRAVLPPNELEEYNQILLDMETTYSVANVCYTNGTCLSLEPDLTNIMATSRKYEELLWVWKSWRDKVGRAILPFFPKYVDFSNKIAKLNGYSDAGDSWRSSYESDDLEQDLEKLYQELQPLYLNLHAYVRRSLHRHYGSEYINLDGPIPAHLLGNMWAQTWSNIYDLVAPFPSAPSIDATEAMIKQGWTPRRIFKEADNFFTSLGLLPVPPEFWNKSMLEKPTDGREVVCHASAWDFYNGKDFRIKQCTSVNMEELVIAHHEMGHIQYFMQYKDLPVTFREGANPGFHEAIGDVLALSVSTPKHLHSLNLLSSEGSGYEHDINFLMKMALDKIAFIPFSYLIDQWRWRVFDGSITKENYNQEWWSLRLKYQGLCPPVPRSQGDFDPGSKFHVPANVPYIRYFISFIIQFQFHEALCRAAGHTGPLYKCDIYQSKEAGKLLADAMKLGYSKQWPEAMKIITGQPNMSASAIMNYFKPLTEWLVTENRRHGETLGWPEYTWTPNTARAEGSLPESSRVNFLGMYLEPQQARVGQWVLLFLGVALLVATVGLAHRLYNIHNHHSLRRPHRGPQFGSEVELRHS.

A signal peptide spans 1-35 (MGAASGQRGRWPLSPPLLMLSLLLLLLLPPSPAPA). The Extracellular portion of the chain corresponds to 36–1265 (LDPGLQPGNF…LEPQQARVGQ (1230 aa)). Residues Asn-44, Asn-60, Asn-80, Asn-117, Asn-152, and Asn-166 are each glycosylated (N-linked (GlcNAc...) asparagine). Peptidase M2 domains lie at 46–630 (SADE…LGWP) and 649–1228 (ETDE…LGWP). Cys-163 and Cys-171 are disulfide-bonded. Tyr-237 is a binding site for chloride. Asn-324 is a glycosylation site (N-linked (GlcNAc...) asparagine). Residues Cys-365 and Cys-383 are joined by a disulfide bond. Residue His-396 participates in Zn(2+) binding. Residue Glu-397 is the Proton acceptor 1 of the active site. Zn(2+) contacts are provided by His-400 and Glu-424. Asn-515 is a glycosylation site (N-linked (GlcNAc...) asparagine). The active-site Proton donor 1 is His-526. Residue Arg-535 coordinates chloride. Cys-551 and Cys-563 form a disulfide bridge. Asn-683, Asn-701, Asn-720, and Asn-766 each carry an N-linked (GlcNAc...) asparagine glycan. Cys-763 and Cys-769 are oxidised to a cystine. Residues Arg-797 and Tyr-835 each coordinate chloride. The N-linked (GlcNAc...) asparagine glycan is linked to Asn-948. A disulfide bond links Cys-963 and Cys-981. A Zn(2+)-binding site is contributed by His-994. Glu-995 (proton acceptor 2) is an active-site residue. Zn(2+) is bound by residues His-998 and Glu-1022. Chloride contacts are provided by Trp-1096 and Arg-1100. His-1124 (proton donor 2) is an active-site residue. Arg-1133 lines the chloride pocket. A disulfide bridge connects residues Cys-1149 and Cys-1161. N-linked (GlcNAc...) asparagine glycosylation occurs at Asn-1197. The segment at 1221 to 1262 (HGETLGWPEYTWTPNTARAEGSLPESSRVNFLGMYLEPQQAR) is juxtamembrane stalk. A helical transmembrane segment spans residues 1266–1282 (WVLLFLGVALLVATVGL). Residues 1283-1313 (AHRLYNIHNHHSLRRPHRGPQFGSEVELRHS) are Cytoplasmic-facing. Ser-1306 is modified (phosphoserine).

This sequence belongs to the peptidase M2 family. In terms of assembly, monomer and homodimer; homodimerizes following binding to an inhibitor. Interacts with calmodulin (CALM1, CALM2 or CALM3); interaction takes place in the cytoplasmic region and regulates phosphorylation and proteolytic cleavage. Zn(2+) serves as cofactor. Requires chloride as cofactor. Produced following proteolytic cleavage by secretase enzymes that cleave the transmembrane form in the juxtamembrane stalk region upstream of the transmembrane region. Cleavage can take place at different sites of the juxtamembrane stalk region. Post-translationally, phosphorylated by CK2 on Ser-1306; which allows membrane retention. Phosphorylated on tyrosine residues on its extracellular part, promoting cleavage by secretase enzymes and formation of the soluble form (Angiotensin-converting enzyme, soluble form). In terms of tissue distribution, expressed in brain, kidney, lung, skeletal muscle and heart. Testis-specific isoform is expressed in spermatocytes, adult testis.

The protein resides in the cell membrane. It localises to the cytoplasm. The protein localises to the secreted. The enzyme catalyses Release of a C-terminal dipeptide, oligopeptide-|-Xaa-Yaa, when Xaa is not Pro, and Yaa is neither Asp nor Glu. Thus, conversion of angiotensin I to angiotensin II, with increase in vasoconstrictor activity, but no action on angiotensin II.. The catalysed reaction is angiotensin I + H2O = L-histidyl-L-leucine + angiotensin II. It carries out the reaction bradykinin + H2O = L-Phe-L-Arg + bradykinin(1-7). It catalyses the reaction substance P + H2O = substance P(1-9) + L-Leu-L-Met-NH2. The enzyme catalyses substance P + H2O = substance P(1-8) + Gly-L-Leu-L-Met-NH2. The catalysed reaction is substance P + H2O = L-Phe-L-Phe-Gly-L-Leu-L-Met-NH2 + substance P(1-6). It carries out the reaction neurotensin + H2O = neurotensin(1-11) + L-isoleucyl-L-leucine. It catalyses the reaction goralatide + H2O = N-acetyl-L-seryl-L-aspartate + L-lysyl-L-proline. The enzyme catalyses Met-enkephalin + H2O = L-phenylalanyl-L-methionine + L-tyrosylglycylglycine. The catalysed reaction is Leu-enkephalin + H2O = L-tyrosylglycylglycine + L-phenylalanyl-L-leucine. It carries out the reaction Met-enkephalin-Arg-Phe + H2O = L-arginyl-L-phenylalanine + Met-enkephalin. Its activity is regulated as follows. The dipeptidyl carboxypeptidase activity is strongly activated by chloride. The dipeptidyl carboxypeptidase activity is specifically inhibited by lisinopril, captopril and enalaprilat. Strongly inhibited by lisinopril and captopril. Functionally, dipeptidyl carboxypeptidase that removes dipeptides from the C-terminus of a variety of circulating hormones, such as angiotensin I, bradykinin or enkephalins, thereby playing a key role in the regulation of blood pressure, electrolyte homeostasis or synaptic plasticity. Composed of two similar catalytic domains, each possessing a functional active site, with different selectivity for substrates. Plays a major role in the angiotensin-renin system that regulates blood pressure and sodium retention by the kidney by converting angiotensin I to angiotensin II, resulting in an increase of the vasoconstrictor activity of angiotensin. Also able to inactivate bradykinin, a potent vasodilator, and therefore enhance the blood pressure response. Acts as a regulator of synaptic transmission by mediating cleavage of neuropeptide hormones, such as substance P, neurotensin or enkephalins. Catalyzes degradation of different enkephalin neuropeptides (Met-enkephalin, Leu-enkephalin, Met-enkephalin-Arg-Phe and possibly Met-enkephalin-Arg-Gly-Leu). Acts as a regulator of synaptic plasticity in the nucleus accumbens of the brain by mediating cleavage of Met-enkephalin-Arg-Phe, a strong ligand of Mu-type opioid receptor OPRM1, into Met-enkephalin. Met-enkephalin-Arg-Phe cleavage by ACE decreases activation of OPRM1, leading to long-term synaptic potentiation of glutamate release. Also acts as a regulator of hematopoietic stem cell differentiation by mediating degradation of hemoregulatory peptide N-acetyl-SDKP (AcSDKP). Acts as a regulator of cannabinoid signaling pathway by mediating degradation of hemopressin, an antagonist peptide of the cannabinoid receptor CNR1. Involved in amyloid-beta metabolism by catalyzing degradation of Amyloid-beta protein 40 and Amyloid-beta protein 42 peptides, thereby preventing plaque formation. Catalyzes cleavage of cholecystokinin (maturation of Cholecystokinin-8 and Cholecystokinin-5) and Gonadoliberin-1 (both maturation and degradation) hormones. Degradation of hemoregulatory peptide N-acetyl-SDKP (AcSDKP) and amyloid-beta proteins is mediated by the N-terminal catalytic domain, while angiotensin I and cholecystokinin cleavage is mediated by the C-terminal catalytic region. In terms of biological role, soluble form that is released in blood plasma and other body fluids following proteolytic cleavage in the juxtamembrane stalk region. Isoform produced by alternative promoter usage that is specifically expressed in spermatocytes and adult testis, and which is required for male fertility. In contrast to somatic isoforms, only contains one catalytic domain. Acts as a dipeptidyl carboxypeptidase that removes dipeptides from the C-terminus of substrates. The identity of substrates that are needed for male fertility is unknown. May also have a glycosidase activity which releases GPI-anchored proteins from the membrane by cleaving the mannose linkage in the GPI moiety. The GPIase activity was reported to be essential for the egg-binding ability of the sperm. This activity is however unclear and has been challenged by other groups, suggesting that it may be indirect. This Rattus norvegicus (Rat) protein is Angiotensin-converting enzyme.